Consider the following 250-residue polypeptide: Acidic endochitinase (250 aa).

Residue glutamine 1 is modified to Pyrrolidone carboxylic acid. Positions 1-36 constitute a Chitin-binding type-1 domain; that stretch reads QNCQCDTTIYCCSQHGYCGNSYDYCGPGCQAGPCWD. Disulfide bonds link cysteine 3–cysteine 12, cysteine 5–cysteine 18, cysteine 11–cysteine 25, cysteine 29–cysteine 34, cysteine 66–cysteine 115, cysteine 128–cysteine 136, and cysteine 218–cysteine 250. Glutamate 110 (proton donor) is an active-site residue.

This sequence belongs to the glycosyl hydrolase 19 family. Chitinase class I subfamily.

It carries out the reaction Random endo-hydrolysis of N-acetyl-beta-D-glucosaminide (1-&gt;4)-beta-linkages in chitin and chitodextrins.. In terms of biological role, defense against chitin-containing fungal pathogens. The chain is Acidic endochitinase from Dioscorea japonica (Japanese yam).